The sequence spans 1025 residues: Multidrug resistance protein MdtC (1025 aa).

The next 12 helical transmembrane spans lie at 3–23 (FFAL…AITL), 333–353 (EVEQ…FLFL), 360–380 (IIPA…MYLC), 387–407 (LSLM…IVVL), 431–451 (VGFT…PLLL), 463–483 (FAVT…TLTP), 528–548 (LVGV…ISIP), 853–873 (VILI…LYES), 875–895 (VHPL…LLAL), 897–917 (LFNA…IGIV), 953–973 (PIMM…LSGG), and 984–1004 (ITIV…TPVV).

The protein belongs to the resistance-nodulation-cell division (RND) (TC 2.A.6) family. MdtC subfamily. Part of a tripartite efflux system composed of MdtA, MdtB and MdtC. MdtC forms a heteromultimer with MdtB.

It is found in the cell inner membrane. The sequence is that of Multidrug resistance protein MdtC from Shigella sonnei (strain Ss046).